The chain runs to 138 residues: MRTLWIVAVCLIGVEGNLFQFGDMILQKTGKEAVHSYAIYGCYCGWGGQGRAQDATDRCCFAQDCCYGRVNDCNPKMATYTYSFENGDIVCGDNDLCLRAVCECDRAAAICLGENVNTYDKNYEYYSISHCTEESEQC.

The N-terminal stretch at 1-16 (MRTLWIVAVCLIGVEG) is a signal peptide. Disulfide bonds link C42-C131, C44-C60, C59-C111, C65-C138, C66-C104, C73-C97, and C91-C102.

It belongs to the phospholipase A2 family. Group II subfamily. D49 sub-subfamily. Heterodimer of a toxic basic protein having phospholipase A2 activity (B chain (AC Q8JFG0)) and a non-toxic acidic protein functioning as its inhibitor (A chain). Expressed by the venom gland.

The protein resides in the secreted. Functionally, heterodimer: postsynaptic neurotoxin. Monomer: the acidic chain inhibits the basic phospholipase A2 of the complex. The polypeptide is Acidic phospholipase A2 inhibitor vaspin A chain (Vipera aspis aspis (Aspic viper)).